The chain runs to 290 residues: Arginine N-acetyltransferase avaD (290 aa).

An acetyl-CoA-binding site is contributed by 157 to 163 (NQAHFEA).

This sequence belongs to the acetyltransferase family. GCN5 subfamily.

It functions in the pathway secondary metabolite metabolism. Arginine N-acetyltransferase; part of the cluster that mediates the biosynthesis of a highly modified cyclo-arginine-tryptophan dipeptide (cRW). Within the pathway, avaD catalyzes the N-acetylation of the guanidine group. The first step of the pathway is perfornmed by the arginine-containing cyclodipeptide synthase (RCPDS) avaA that acts as the scaffold-generating enzyme and is responsible for formation of the cyclo-Arg-Trp (cRW) diketopiperazine. AvaB then acts as a multifunctional flavoenzyme that is responsible for generating the cyclo-Arg-formylkynurenine DKP, which can be deformylated by avaC. AvaB then further catalyzes an additional N-oxidation followed by cyclization and dehydration. The next step is an N-acetylation of the guanidine group catalyzed by the arginine N-acetyltransferase avaD. The roles of the additional enzymes identified within the ava cluster still have to be determined. The sequence is that of Arginine N-acetyltransferase avaD from Aspergillus versicolor.